We begin with the raw amino-acid sequence, 87 residues long: Small ribosomal subunit protein bS20 (87 aa).

Basic residues predominate over residues 1–11 (MANIKSAKKRA). Residues 1-27 (MANIKSAKKRAVQSEKRRQHNASQRSM) form a disordered region.

It belongs to the bacterial ribosomal protein bS20 family.

Binds directly to 16S ribosomal RNA. This Haemophilus influenzae (strain PittEE) protein is Small ribosomal subunit protein bS20.